Reading from the N-terminus, the 352-residue chain is Histidinol-phosphate aminotransferase (352 aa).

Position 221 is an N6-(pyridoxal phosphate)lysine (lysine 221).

It belongs to the class-II pyridoxal-phosphate-dependent aminotransferase family. Histidinol-phosphate aminotransferase subfamily. Homodimer. Pyridoxal 5'-phosphate serves as cofactor.

It catalyses the reaction L-histidinol phosphate + 2-oxoglutarate = 3-(imidazol-4-yl)-2-oxopropyl phosphate + L-glutamate. Its pathway is amino-acid biosynthesis; L-histidine biosynthesis; L-histidine from 5-phospho-alpha-D-ribose 1-diphosphate: step 7/9. The protein is Histidinol-phosphate aminotransferase of Staphylococcus aureus (strain MSSA476).